The chain runs to 315 residues: Acetaldehyde dehydrogenase 1 (315 aa).

Position 12–15 (12–15) interacts with NAD(+); it reads SGNI. Cys-132 acts as the Acyl-thioester intermediate in catalysis. NAD(+) contacts are provided by residues 163–171 and Asn-291; that span reads SAGPGTRAN.

It belongs to the acetaldehyde dehydrogenase family.

The enzyme catalyses acetaldehyde + NAD(+) + CoA = acetyl-CoA + NADH + H(+). This is Acetaldehyde dehydrogenase 1 from Paraburkholderia phymatum (strain DSM 17167 / CIP 108236 / LMG 21445 / STM815) (Burkholderia phymatum).